Here is a 540-residue protein sequence, read N- to C-terminus: Sensory neuron membrane protein 1 (540 aa).

The Cytoplasmic portion of the chain corresponds to 1–105 (MRTDDPVIGN…WIFRPDLSKP (105 aa)). A helical transmembrane segment spans residues 106-126 (LTGDEMITIPHPLILGALLMV). The Extracellular portion of the chain corresponds to 127 to 436 (QRDREAMMPL…YTLFLGLRFN (310 aa)). N-linked (GlcNAc...) asparagine glycosylation is found at asparagine 193 and asparagine 206. Disulfide bonds link cysteine 245/cysteine 310, cysteine 274/cysteine 330, and cysteine 312/cysteine 319. An N-linked (GlcNAc...) asparagine glycan is attached at asparagine 418. The helical transmembrane segment at 437–457 (TAVKWLTIIIGTIGTIVGGFM) threads the bilayer. At 458–540 (HYKRTTKMVN…VTVTEMQERY (83 aa)) the chain is on the cytoplasmic side.

Belongs to the CD36 family.

It is found in the cell membrane. Functionally, plays an olfactory role that is not restricted to pheromone sensitivity. The sequence is that of Sensory neuron membrane protein 1 from Aedes aegypti (Yellowfever mosquito).